We begin with the raw amino-acid sequence, 216 residues long: MQMPDVGSLLLVVVIMLGLLPFAAMVVTSYTKIVVVLGLLRNAIGVQQVPPNMVLNGVALLVSCFVMAPVGMEAFKAAAQNYGAGSDNSRVVVLLDACREPFRQFLLKHTREREKAFFMRSAQQIWPKDKAATLKSDDLLVLAPAFTLSELTEAFRIGFLLYLVFIVIDLVVANALMAMGLSQVTPTNVAIPFKLLLFVAMDGWSMLIHGLVLSYR.

Helical transmembrane passes span valine 6 to valine 26, leucine 55 to phenylalanine 75, isoleucine 157 to methionine 177, and phenylalanine 193 to leucine 213.

Belongs to the FliP/MopC/SpaP family.

The protein resides in the cell membrane. In terms of biological role, important for pathogenicity. The protein is Pathogenicity-related ORF2 of Xanthomonas campestris pv. glycines.